A 242-amino-acid polypeptide reads, in one-letter code: MLIIPAIDIYKSKVVRMETGKKEKIILEFDNPIDLAKYWEKKGAKALHLIDLQSAIDGIDENKNIIREIIKNVSIPVEVGGGYRDKEKIEEAINWGVWRVIVSSILEKDLGYLSDLFSKYKEKIIPSIDWYDGRVGIKGWQDFVEWRNIKDKLDLLRVKEVIFTDISRDGTLRGINVENIKTFLRLHDYDIWIAGGISSIEDIIKIKNIWKETERIKGVIIGRALLEGRINWEEAEDIINAG.

Asp-8 (proton acceptor) is an active-site residue. The active-site Proton donor is the Asp-129.

Belongs to the HisA/HisF family.

The protein localises to the cytoplasm. It catalyses the reaction 1-(5-phospho-beta-D-ribosyl)-5-[(5-phospho-beta-D-ribosylamino)methylideneamino]imidazole-4-carboxamide = 5-[(5-phospho-1-deoxy-D-ribulos-1-ylimino)methylamino]-1-(5-phospho-beta-D-ribosyl)imidazole-4-carboxamide. It participates in amino-acid biosynthesis; L-histidine biosynthesis; L-histidine from 5-phospho-alpha-D-ribose 1-diphosphate: step 4/9. This is 1-(5-phosphoribosyl)-5-[(5-phosphoribosylamino)methylideneamino] imidazole-4-carboxamide isomerase from Dictyoglomus turgidum (strain DSM 6724 / Z-1310).